The following is a 101-amino-acid chain: DAEHKSNICKHFQVVGEEKFKNIILVTQDGHGPFIQVSKEEQCKHYAENRVPYMGNFIYTAAKRHPDLPATEVLIYAFXYESGAVLVSYPEMVGCCPPDVL.

2 Albumin domains span residues 1-80 (DAEH…AFXY) and 81-101 (ESGA…PDVL). Residue His4 coordinates Cu cation.

This sequence belongs to the ALB/AFP/VDB family. In terms of tissue distribution, plasma.

The protein resides in the secreted. Functionally, binds water, Ca(2+), Na(+), K(+), fatty acids, hormones, bilirubin and drugs. Its main function is the regulation of the colloidal osmotic pressure of blood. This Neoceratodus forsteri (Australian lungfish) protein is Albumin (alb).